Consider the following 529-residue polypeptide: VIN3-like protein 3 (529 aa).

The Nuclear localization signal signature appears at 97–104; it reads PKRQKRDL. Residues 137-207 form a PHD-type zinc finger; it reads RCSCCICFKY…CFNCVSCGKT (71 aa). Residues 214 to 221 carry the Nuclear localization signal motif; sequence LKKQLIIA. The Fibronectin type-III domain occupies 312–411; the sequence is GSMKIRIESV…FIVSTKTLQD (100 aa). The tract at residues 421–529 is VIN3-Interacting Domain (VID); it reads MSNCNNANKM…AGVSLILLQD (109 aa).

As to quaternary structure, interacts with VIN3.

It is found in the nucleus. Involved in both the vernalization and photoperiod pathways by regulating gene expression. This is VIN3-like protein 3 (VIL3) from Arabidopsis thaliana (Mouse-ear cress).